Here is a 37-residue protein sequence, read N- to C-terminus: Ice-structuring protein 3 (37 aa).

This sequence belongs to the type-I AFP family.

Functionally, contributes to protect fish blood from freezing at subzero sea water temperatures. Lowers the blood freezing point. Binds to nascent ice crystals and prevents further growth. This Pseudopleuronectes americanus (Winter flounder) protein is Ice-structuring protein 3.